A 37-amino-acid chain; its full sequence is Large ribosomal subunit protein bL36 (37 aa).

It belongs to the bacterial ribosomal protein bL36 family.

This is Large ribosomal subunit protein bL36 from Nostoc sp. (strain PCC 7120 / SAG 25.82 / UTEX 2576).